Reading from the N-terminus, the 325-residue chain is Phage-like element PBSX protein XkdQ (325 aa).

To B.subtilis YqbQ.

This chain is Phage-like element PBSX protein XkdQ (xkdQ), found in Bacillus subtilis (strain 168).